We begin with the raw amino-acid sequence, 65 residues long: Hirudin-3 (65 aa).

An interaction with thrombin active site region spans residues 1–3; that stretch reads VVY. Intrachain disulfides connect C6/C14, C16/C28, and C22/C39. The tract at residues 39-65 is disordered; it reads CVTGEGTPKPQSHNDGDFEEIPEEYLQ. T45 carries an O-linked (GalNAc...) threonine glycan. An interaction with fibrinogen-binding exosite of thrombin region spans residues 55 to 65; that stretch reads DFEEIPEEYLQ. Acidic residues predominate over residues 55–65; it reads DFEEIPEEYLQ. The residue at position 63 (Y63) is a Sulfotyrosine.

It belongs to the protease inhibitor I14 (hirudin) family.

It localises to the secreted. Hirudin is a potent thrombin-specific protease inhibitor. It forms a stable non-covalent complex with alpha-thrombin, thereby abolishing its ability to cleave fibrinogen. This is Hirudin-3 from Hirudo medicinalis (Medicinal leech).